A 198-amino-acid chain; its full sequence is Recombination protein RecR (198 aa).

The C4-type zinc-finger motif lies at 58–73 (CSVCGNFTDKDPCAIC). A Toprim domain is found at 81–175 (NTICVVEHPK…KVTRIAHGIP (95 aa)).

The protein belongs to the RecR family.

May play a role in DNA repair. It seems to be involved in an RecBC-independent recombinational process of DNA repair. It may act with RecF and RecO. The sequence is that of Recombination protein RecR from Clostridium tetani (strain Massachusetts / E88).